Reading from the N-terminus, the 309-residue chain is UDP-N-acetylenolpyruvoylglucosamine reductase (309 aa).

An FAD-binding PCMH-type domain is found at 24–187 (RVGGPADWLF…TKAVFEAPRG (164 aa)). Residue R167 is part of the active site. Positions 200-213 (LARRDATQPTKERS) are enriched in basic and acidic residues. Residues 200–230 (LARRDATQPTKERSAGSTFRNPAGFSSTGRS) are disordered. Polar residues predominate over residues 214–228 (AGSTFRNPAGFSSTG). The active-site Proton donor is S216. The active site involves E298.

This sequence belongs to the MurB family. It depends on FAD as a cofactor.

Its subcellular location is the cytoplasm. It catalyses the reaction UDP-N-acetyl-alpha-D-muramate + NADP(+) = UDP-N-acetyl-3-O-(1-carboxyvinyl)-alpha-D-glucosamine + NADPH + H(+). It functions in the pathway cell wall biogenesis; peptidoglycan biosynthesis. In terms of biological role, cell wall formation. The chain is UDP-N-acetylenolpyruvoylglucosamine reductase from Roseobacter denitrificans (strain ATCC 33942 / OCh 114) (Erythrobacter sp. (strain OCh 114)).